The chain runs to 205 residues: Small ribosomal subunit protein uS4 (205 aa).

A compositionally biased stretch (basic residues) spans 1 to 12 (MSKRVQAKHKLD). Positions 1-49 (MSKRVQAKHKLDRRMGQNIWGRPKSPVNRREYGPGQHGQRRKGKMSDFG) are disordered. In terms of domain architecture, S4 RNA-binding spans 94–155 (RRLDAVVYRS…ASRQLEIVVV (62 aa)).

The protein belongs to the universal ribosomal protein uS4 family. Part of the 30S ribosomal subunit. Contacts protein S5. The interaction surface between S4 and S5 is involved in control of translational fidelity.

Its function is as follows. One of the primary rRNA binding proteins, it binds directly to 16S rRNA where it nucleates assembly of the body of the 30S subunit. In terms of biological role, with S5 and S12 plays an important role in translational accuracy. This Methylorubrum populi (strain ATCC BAA-705 / NCIMB 13946 / BJ001) (Methylobacterium populi) protein is Small ribosomal subunit protein uS4.